The chain runs to 444 residues: Na(+)-translocating NADH-quinone reductase subunit A (444 aa).

It belongs to the NqrA family. Composed of six subunits; NqrA, NqrB, NqrC, NqrD, NqrE and NqrF.

The enzyme catalyses a ubiquinone + n Na(+)(in) + NADH + H(+) = a ubiquinol + n Na(+)(out) + NAD(+). NQR complex catalyzes the reduction of ubiquinone-1 to ubiquinol by two successive reactions, coupled with the transport of Na(+) ions from the cytoplasm to the periplasm. NqrA to NqrE are probably involved in the second step, the conversion of ubisemiquinone to ubiquinol. The polypeptide is Na(+)-translocating NADH-quinone reductase subunit A (Shewanella denitrificans (strain OS217 / ATCC BAA-1090 / DSM 15013)).